A 102-amino-acid chain; its full sequence is Putative pterin-4-alpha-carbinolamine dehydratase (102 aa).

Belongs to the pterin-4-alpha-carbinolamine dehydratase family.

It carries out the reaction (4aS,6R)-4a-hydroxy-L-erythro-5,6,7,8-tetrahydrobiopterin = (6R)-L-erythro-6,7-dihydrobiopterin + H2O. This Burkholderia cenocepacia (strain HI2424) protein is Putative pterin-4-alpha-carbinolamine dehydratase.